Here is a 393-residue protein sequence, read N- to C-terminus: Chorismate synthase (393 aa).

NADP(+) contacts are provided by Arg-39 and Arg-45. FMN-binding positions include Arg-133 to Ser-135, Asn-256 to Ala-257, Gly-301, Lys-316 to Thr-320, and Arg-342.

The protein belongs to the chorismate synthase family. Homotetramer. The cofactor is FMNH2.

The enzyme catalyses 5-O-(1-carboxyvinyl)-3-phosphoshikimate = chorismate + phosphate. It functions in the pathway metabolic intermediate biosynthesis; chorismate biosynthesis; chorismate from D-erythrose 4-phosphate and phosphoenolpyruvate: step 7/7. In terms of biological role, catalyzes the anti-1,4-elimination of the C-3 phosphate and the C-6 proR hydrogen from 5-enolpyruvylshikimate-3-phosphate (EPSP) to yield chorismate, which is the branch point compound that serves as the starting substrate for the three terminal pathways of aromatic amino acid biosynthesis. This reaction introduces a second double bond into the aromatic ring system. The chain is Chorismate synthase from Lysinibacillus sphaericus (strain C3-41).